The sequence spans 372 residues: 1,3,6,8-tetrahydroxynaphthalene synthase (372 aa).

Residue C138 is part of the active site.

The protein belongs to the thiolase-like superfamily. Chalcone/stilbene synthases family. As to quaternary structure, homodimer.

The enzyme catalyses 5 malonyl-CoA + 5 H(+) = naphthalene-1,3,6,8-tetrol + 5 CO2 + 5 CoA + H2O. It participates in pigment biosynthesis; melanin biosynthesis. Functionally, involved in the biosynthesis of melanin but also various secondary metabolites containing a naphthoquinone ring. Catalyzes the iterative condensation of five CoA-linked malonyl units to form a pentaketide intermediate. THNS subsequently catalyzes the dual intramolecular Claisen and aldol condensations of this linear intermediate to produce the fused ring of 1,3,6,8-tetrahydroxynaphthalene (THN). The polypeptide is 1,3,6,8-tetrahydroxynaphthalene synthase (Streptomyces griseus).